A 265-amino-acid polypeptide reads, in one-letter code: Putative cysteine-rich receptor-like protein kinase At4g11521 (265 aa).

A signal peptide spans 1-23 (MMLNTLFLPIFLFFLITFDYVST). 2 consecutive Gnk2-homologous domains span residues 24 to 122 (QTCF…NISF) and 128 to 241 (MEPS…LYPF). Residues asparagine 34, asparagine 102, and asparagine 119 are each glycosylated (N-linked (GlcNAc...) asparagine). Asparagine 247 carries N-linked (GlcNAc...) asparagine glycosylation.

Belongs to the protein kinase superfamily. Ser/Thr protein kinase family. CRK subfamily.

Its subcellular location is the secreted. The polypeptide is Putative cysteine-rich receptor-like protein kinase At4g11521 (Arabidopsis thaliana (Mouse-ear cress)).